The sequence spans 167 residues: Neutrophilic granule protein (167 aa).

An N-terminal signal peptide occupies residues 1–21 (MAGLWKTFVLVVALAVVSCEA). The interval 122 to 141 (EDTQETSFNDKQDVSEKEKF) is disordered.

This sequence belongs to the cathelicidin family. Monomer. Homodimer; disulfide-linked. Expressed in myeloid bone marrow cells. Expressed in neutrophilic precursors (at protein level). Expressed in myeloid bone marrow cells.

It is found in the secreted. Its subcellular location is the cytoplasmic granule. Its function is as follows. Acts as an inhibitor of cathepsin B (CTSB) activity. Plays a role as a negative regulator of tumor vascular development, cell invasion and metastasis. This chain is Neutrophilic granule protein, found in Mus musculus (Mouse).